A 929-amino-acid polypeptide reads, in one-letter code: Urea transporter 2 (929 aa).

Residues 1–11 (MSDHPLKEMSD) are compositionally biased toward basic and acidic residues. Residues 1 to 89 (MSDHPLKEMS…KRRESELPRR (89 aa)) form a disordered region. Residues 31-42 (SELSSPTWPSSS) are compositionally biased toward low complexity. Residues 55-88 (PEEKDLRSSDEDSHIVKIEKPNERSKRRESELPR) are compositionally biased toward basic and acidic residues. The next 9 membrane-spanning stretches (helical) occupy residues 133 to 155 (GAAQ…GLLI), 162 to 179 (IAGA…LALS), 184 to 204 (AIAS…VAVF), 212 to 232 (WWLL…SSAL), 241 to 261 (LPVF…ATGH), 310 to 330 (GGVI…HAAI), 349 to 371 (IYTG…MFYV), 378 to 399 (LLAL…NMMA), and 400 to 420 (VVGV…FLLL). The disordered stretch occupies residues 451–480 (SDEQKPPNGGGGEQSHGGGQRKAEEGSETV). The segment covering 458 to 470 (NGGGGEQSHGGGQ) has biased composition (gly residues). Position 486 is a phosphoserine (Ser-486). A run of 4 helical transmembrane segments spans residues 609–629 (GILI…SGCL), 647–667 (AIAA…MAVF), 675–695 (WWLL…SSAL), and 704–724 (LPVF…ATGH). N-linked (GlcNAc...) asparagine glycosylation occurs at Asn-742. 4 helical membrane passes run 773-793 (GGIF…HAAI), 812-832 (IYFG…GGMF), 841-861 (LLAI…ANML), and 863-883 (VFGL…FLLL).

Belongs to the urea transporter family. In terms of assembly, interacts with SNAPIN which enhances its urea transport activity. Expressed in the inner medulla of the kidney. In terms of tissue distribution, expressed in both the inner and outer renal medulla of the kidney.

It is found in the apical cell membrane. The protein resides in the cell membrane. The catalysed reaction is urea(in) = urea(out). Inhibited by phloretin. Activated by vasopressin, forskolin, 3-isobutyl-1-methylxanthine (IBMX) and cAMP. With respect to regulation, inhibited by phloretin. Its activity is regulated as follows. Inhibited by urea analogs and phloretin and activated by forskolin. Inhibited by phloretin and activated by forskolin. In terms of biological role, mediates the transport of urea driven by a concentration gradient across the cell membrane of the kidney inner medullary collecting duct which is critical to the urinary concentrating mechanism. This chain is Urea transporter 2 (Slc14a2), found in Rattus norvegicus (Rat).